The primary structure comprises 513 residues: GMP synthase [glutamine-hydrolyzing] (513 aa).

The Glutamine amidotransferase type-1 domain maps to 9 to 198; sequence LILVLDFGSQ…VRRVCDCRGQ (190 aa). C86 (nucleophile) is an active-site residue. Catalysis depends on residues H172 and E174. The GMPS ATP-PPase domain occupies 199–388; that stretch reads WTMENFIEIE…LGIPEHLVWR (190 aa). 226 to 232 contributes to the ATP binding site; sequence SGGVDSS.

As to quaternary structure, homodimer.

It carries out the reaction XMP + L-glutamine + ATP + H2O = GMP + L-glutamate + AMP + diphosphate + 2 H(+). The protein operates within purine metabolism; GMP biosynthesis; GMP from XMP (L-Gln route): step 1/1. In terms of biological role, catalyzes the synthesis of GMP from XMP. The polypeptide is GMP synthase [glutamine-hydrolyzing] (Staphylococcus aureus (strain USA300)).